We begin with the raw amino-acid sequence, 268 residues long: Tropinone reductase homolog At2g29370 (268 aa).

22-46 provides a ligand contact to NADP(+); sequence LVTGGSKGLGKAVVEELAMLGARVH. Ser-155 provides a ligand contact to substrate. Tyr-168 functions as the Proton acceptor in the catalytic mechanism.

This sequence belongs to the short-chain dehydrogenases/reductases (SDR) family. SDR65C subfamily.

In Arabidopsis thaliana (Mouse-ear cress), this protein is Tropinone reductase homolog At2g29370.